Here is a 91-residue protein sequence, read N- to C-terminus: DNA-directed RNA polymerase subunit omega (91 aa).

Belongs to the RNA polymerase subunit omega family. The RNAP catalytic core consists of 2 alpha, 1 beta, 1 beta' and 1 omega subunit. When a sigma factor is associated with the core the holoenzyme is formed, which can initiate transcription.

The enzyme catalyses RNA(n) + a ribonucleoside 5'-triphosphate = RNA(n+1) + diphosphate. Promotes RNA polymerase assembly. Latches the N- and C-terminal regions of the beta' subunit thereby facilitating its interaction with the beta and alpha subunits. This is DNA-directed RNA polymerase subunit omega from Serratia proteamaculans (strain 568).